The following is a 371-amino-acid chain: N-acetyldiaminopimelate deacetylase (371 aa).

Residue Asp-68 is part of the active site. The active-site Proton acceptor is Glu-127.

It belongs to the peptidase M20A family. N-acetyldiaminopimelate deacetylase subfamily.

It carries out the reaction N-acetyl-(2S,6S)-2,6-diaminopimelate + H2O = (2S,6S)-2,6-diaminopimelate + acetate. Its pathway is amino-acid biosynthesis; L-lysine biosynthesis via DAP pathway; LL-2,6-diaminopimelate from (S)-tetrahydrodipicolinate (acetylase route): step 3/3. Its function is as follows. Catalyzes the conversion of N-acetyl-diaminopimelate to diaminopimelate and acetate. In Listeria monocytogenes serotype 4b (strain CLIP80459), this protein is N-acetyldiaminopimelate deacetylase.